Here is a 370-residue protein sequence, read N- to C-terminus: Chorismate synthase (370 aa).

Arginine 48 is a binding site for NADP(+). Residues 125 to 127 (RSS), 241 to 242 (NA), glycine 286, 301 to 305 (KPTSS), and arginine 327 contribute to the FMN site.

The protein belongs to the chorismate synthase family. In terms of assembly, homotetramer. It depends on FMNH2 as a cofactor.

It carries out the reaction 5-O-(1-carboxyvinyl)-3-phosphoshikimate = chorismate + phosphate. The protein operates within metabolic intermediate biosynthesis; chorismate biosynthesis; chorismate from D-erythrose 4-phosphate and phosphoenolpyruvate: step 7/7. In terms of biological role, catalyzes the anti-1,4-elimination of the C-3 phosphate and the C-6 proR hydrogen from 5-enolpyruvylshikimate-3-phosphate (EPSP) to yield chorismate, which is the branch point compound that serves as the starting substrate for the three terminal pathways of aromatic amino acid biosynthesis. This reaction introduces a second double bond into the aromatic ring system. This is Chorismate synthase from Ruegeria sp. (strain TM1040) (Silicibacter sp.).